Consider the following 335-residue polypeptide: Fimbrial adhesin PapGIII (335 aa).

A signal peptide spans 1 to 21; the sequence is MKKWLPAFLFLSLSGCNDALA.

Belongs to the adhesin PapG family.

The protein resides in the secreted. Its subcellular location is the fimbrium. Functionally, tip adhesin component of type P pili that binds preferentially to Gal-alpha(1-4)-Gal-containing glycolipids such as globoside. This tip is common in E.coli strains that cause human cystitis, but rare in pyelonephritic isolates. The protein is Fimbrial adhesin PapGIII of Escherichia coli.